A 205-amino-acid chain; its full sequence is StAR-related lipid transfer protein 4 (205 aa).

The 205-residue stretch at 1–205 (MEGLSDVASF…NFYGDLRKAL (205 aa)) folds into the START domain.

The enzyme catalyses cholesterol(in) = cholesterol(out). In terms of biological role, involved in the intracellular transport of cholesterol. Binds cholesterol or other sterols. The chain is StAR-related lipid transfer protein 4 (STARD4) from Homo sapiens (Human).